Consider the following 121-residue polypeptide: Large ribosomal subunit protein bL20 (121 aa).

The protein belongs to the bacterial ribosomal protein bL20 family.

In terms of biological role, binds directly to 23S ribosomal RNA and is necessary for the in vitro assembly process of the 50S ribosomal subunit. It is not involved in the protein synthesizing functions of that subunit. The protein is Large ribosomal subunit protein bL20 of Petrotoga mobilis (strain DSM 10674 / SJ95).